A 117-amino-acid polypeptide reads, in one-letter code: Biogenesis of lysosome-related organelles complex 1 subunit BLS1 (117 aa).

Positions 97 to 117 are disordered; it reads EGKAQDTEQAPGKGDRIFRSD.

It belongs to the BLOC1S1 family. In terms of assembly, component of the biogenesis of lysosome-related organelles complex-1 (BLOC-1).

The protein localises to the endosome. Functionally, component of the biogenesis of lysosome-related organelles complex-1 (BLOC-1), a complex involved in endosomal cargo sorting. This is Biogenesis of lysosome-related organelles complex 1 subunit BLS1 (BLS1) from Eremothecium gossypii (strain ATCC 10895 / CBS 109.51 / FGSC 9923 / NRRL Y-1056) (Yeast).